We begin with the raw amino-acid sequence, 435 residues long: Probable alpha-galactosidase B (435 aa).

The signal sequence occupies residues 1–18 (MLTSLSLTALALLPSANA). The cysteines at positions 41 and 73 are disulfide-linked. N-linked (GlcNAc...) asparagine glycosylation occurs at Asn-81. Cys-123 and Cys-153 are joined by a disulfide. The Nucleophile role is filled by Asp-151. N-linked (GlcNAc...) asparagine glycans are attached at residues Asn-158 and Asn-176. 221-225 (DWGQA) contacts substrate. Residue Asn-232 is glycosylated (N-linked (GlcNAc...) asparagine). Asp-243 serves as the catalytic Proton donor. N-linked (GlcNAc...) asparagine glycosylation occurs at Asn-378.

This sequence belongs to the glycosyl hydrolase 27 family.

It is found in the secreted. The catalysed reaction is Hydrolysis of terminal, non-reducing alpha-D-galactose residues in alpha-D-galactosides, including galactose oligosaccharides, galactomannans and galactolipids.. Its function is as follows. Hydrolyzes a variety of simple alpha-D-galactoside as well as more complex molecules such as oligosaccharides and polysaccharides. The chain is Probable alpha-galactosidase B (agl1) from Penicillium simplicissimum.